The primary structure comprises 184 residues: Large ribosomal subunit protein uL6 (184 aa).

The protein belongs to the universal ribosomal protein uL6 family. As to quaternary structure, part of the 50S ribosomal subunit.

This protein binds to the 23S rRNA, and is important in its secondary structure. It is located near the subunit interface in the base of the L7/L12 stalk, and near the tRNA binding site of the peptidyltransferase center. This chain is Large ribosomal subunit protein uL6, found in Thermococcus gammatolerans (strain DSM 15229 / JCM 11827 / EJ3).